A 262-amino-acid chain; its full sequence is Protein crossbronx-like (262 aa).

The 165-residue stretch at 15–179 (RQGYQVLAEY…VQELALFTKK (165 aa)) folds into the UBC core domain.

This sequence belongs to the ubiquitin-conjugating enzyme family. FTS subfamily.

This Drosophila pseudoobscura pseudoobscura (Fruit fly) protein is Protein crossbronx-like.